Reading from the N-terminus, the 230-residue chain is Heptaprenylglyceryl phosphate synthase (230 aa).

Lysine 12 contributes to the sn-glycerol 1-phosphate binding site. Mg(2+) is bound by residues aspartate 14 and serine 40. Sn-glycerol 1-phosphate is bound by residues 159–164, glycine 189, and 209–210; these read YLEYSG and GN.

It belongs to the GGGP/HepGP synthase family. Group I subfamily. In terms of assembly, homodimer. The cofactor is Mg(2+).

It catalyses the reaction sn-glycerol 1-phosphate + all-trans-heptaprenyl diphosphate = 3-heptaprenyl-sn-glycero-1-phosphate + diphosphate. It functions in the pathway membrane lipid metabolism; glycerophospholipid metabolism. Prenyltransferase that catalyzes in vivo the transfer of the heptaprenyl moiety of heptaprenyl pyrophosphate (HepPP; 35 carbon atoms) to the C3 hydroxyl of sn-glycerol-1-phosphate (G1P), producing heptaprenylglyceryl phosphate (HepGP). This reaction is an ether-bond-formation step in the biosynthesis of archaea-type G1P-based membrane lipids found in Bacillales. This chain is Heptaprenylglyceryl phosphate synthase, found in Bacillus pumilus (strain SAFR-032).